The following is a 423-amino-acid chain: Steroid hormone receptor ERR1 (423 aa).

Positions 1–67 (MSSQVVGIEP…GAGPGEQGGG (67 aa)) are disordered. The tract at residues 1 to 76 (MSSQVVGIEP…GKLVLSSLPK (76 aa)) is repressor domain. K14 is covalently cross-linked (Glycyl lysine isopeptide (Lys-Gly) (interchain with G-Cter in SUMO)). 2 positions are modified to phosphoserine: S19 and S22. Over residues 58–67 (GAGPGEQGGG) the composition is skewed to gly residues. Residues 76–151 (KRLCLVCGDV…VGMLKEGVRL (76 aa)) constitute a DNA-binding region (nuclear receptor). 2 NR C4-type zinc fingers span residues 79 to 99 (CLVC…CEAC) and 115 to 134 (CPAS…CQAC). Residues K129, K138, K160, and K162 each carry the N6-acetyllysine; by PCAF/KAT2B modification. K189 participates in a covalent cross-link: Glycyl lysine isopeptide (Lys-Gly) (interchain with G-Cter in SUMO2). One can recognise an NR LBD domain in the interval 193–421 (PVNALVSHLL…KLFLEMLEAM (229 aa)). K403 is covalently cross-linked (Glycyl lysine isopeptide (Lys-Gly) (interchain with G-Cter in SUMO); alternate). A Glycyl lysine isopeptide (Lys-Gly) (interchain with G-Cter in SUMO2); alternate cross-link involves residue K403. The segment at 403-423 (KLEGKVPMHKLFLEMLEAMMD) is AF-2 domain.

This sequence belongs to the nuclear hormone receptor family. NR3 subfamily. In terms of assembly, binds DNA as a monomer or a homodimer. Interacts (via the AF2 domain) with coactivator PPARGC1A (via the L3 motif); the interaction greatly enhances transcriptional activity of genes involved in energy metabolism. Interacts with PIAS4; the interaction enhances sumoylation. Interacts with MAPK15; promotes re-localization of ESRRA to the cytoplasm through a XPO1-dependent mechanism then inhibits ESRRA transcriptional activity. In terms of processing, phosphorylation on Ser-19 enhances sumoylation on Lys-14 increasing repression of transcriptional activity. Sumoylated with SUMO2. Main site is Lys-14 which is enhanced by phosphorylation on Ser-19, cofactor activation, and by interaction with PIAS4. Sumoylation enhances repression of transcriptional activity, but has no effect on subcellular location nor on DNA binding. Post-translationally, reversibly acetylated. Acetylation by PCAF/KAT2 at Lys-129, Lys-138, Lys-160 and Lys-162 and PCAF/KAT2 decreases transcriptional activity probably by inhibiting DNA-binding activity; deacetylation involves SIRT1 and HDAC8 and increases DNA-binding.

It is found in the nucleus. The protein localises to the cytoplasm. Its function is as follows. Binds to an ERR-alpha response element (ERRE) containing a single consensus half-site, 5'-TNAAGGTCA-3'. Can bind to the medium-chain acyl coenzyme A dehydrogenase (MCAD) response element NRRE-1 and may act as an important regulator of MCAD promoter. Binds to the C1 region of the lactoferrin gene promoter. Requires dimerization and the coactivator, PGC-1A, for full activity. The ERRalpha/PGC1alpha complex is a regulator of energy metabolism. Induces the expression of PERM1 in the skeletal muscle. In Homo sapiens (Human), this protein is Steroid hormone receptor ERR1 (ESRRA).